Reading from the N-terminus, the 165-residue chain is Large ribosomal subunit protein uL10 (165 aa).

It belongs to the universal ribosomal protein uL10 family. In terms of assembly, part of the ribosomal stalk of the 50S ribosomal subunit. The N-terminus interacts with L11 and the large rRNA to form the base of the stalk. The C-terminus forms an elongated spine to which L12 dimers bind in a sequential fashion forming a multimeric L10(L12)X complex.

In terms of biological role, forms part of the ribosomal stalk, playing a central role in the interaction of the ribosome with GTP-bound translation factors. This is Large ribosomal subunit protein uL10 from Edwardsiella ictaluri (strain 93-146).